The primary structure comprises 432 residues: Anaerobic glycerol-3-phosphate dehydrogenase subunit B (432 aa).

It belongs to the anaerobic G-3-P dehydrogenase subunit B family. In terms of assembly, composed of a catalytic GlpA/B dimer and of membrane bound GlpC. FMN serves as cofactor.

It carries out the reaction a quinone + sn-glycerol 3-phosphate = dihydroxyacetone phosphate + a quinol. It participates in polyol metabolism; glycerol degradation via glycerol kinase pathway; glycerone phosphate from sn-glycerol 3-phosphate (anaerobic route): step 1/1. Its function is as follows. Conversion of glycerol 3-phosphate to dihydroxyacetone. Uses fumarate or nitrate as electron acceptor. The sequence is that of Anaerobic glycerol-3-phosphate dehydrogenase subunit B from Haemophilus influenzae (strain 86-028NP).